The sequence spans 523 residues: 2-isopropylmalate synthase (523 aa).

Residues 5–267 form the Pyruvate carboxyltransferase domain; the sequence is VIIFDTTLRD…HTAINHQEIW (263 aa). Mn(2+) contacts are provided by Asp14, His202, His204, and Asn238. Residues 392–523 are regulatory domain; the sequence is RLDYFSVQSG…QHNENNKETV (132 aa).

It belongs to the alpha-IPM synthase/homocitrate synthase family. LeuA type 1 subfamily. As to quaternary structure, homodimer. Requires Mn(2+) as cofactor.

The protein localises to the cytoplasm. The catalysed reaction is 3-methyl-2-oxobutanoate + acetyl-CoA + H2O = (2S)-2-isopropylmalate + CoA + H(+). Its pathway is amino-acid biosynthesis; L-leucine biosynthesis; L-leucine from 3-methyl-2-oxobutanoate: step 1/4. Its function is as follows. Catalyzes the condensation of the acetyl group of acetyl-CoA with 3-methyl-2-oxobutanoate (2-ketoisovalerate) to form 3-carboxy-3-hydroxy-4-methylpentanoate (2-isopropylmalate). This is 2-isopropylmalate synthase from Escherichia coli O45:K1 (strain S88 / ExPEC).